Reading from the N-terminus, the 61-residue chain is Large ribosomal subunit protein bL32c (61 aa).

The interval 37 to 61 (SRSFSSGNEHPKPKGFSGQQQQTNK) is disordered.

The protein belongs to the bacterial ribosomal protein bL32 family.

Its subcellular location is the plastid. The protein localises to the chloroplast. In Agrostis stolonifera (Creeping bentgrass), this protein is Large ribosomal subunit protein bL32c.